Consider the following 735-residue polypeptide: Disintegrin and metalloproteinase domain-containing protein 2 (735 aa).

A signal peptide spans 1–15 (MLCLLLLLCGLASLG). Residues 16–176 (GPLKKYVENS…KIKSIKSSVR (161 aa)) constitute a propeptide that is removed on maturation. At 16 to 680 (GPLKKYVENS…EGAYHTKSRK (665 aa)) the chain is on the extracellular side. Asn-55, Asn-220, and Asn-288 each carry an N-linked (GlcNAc...) asparagine glycan. Residues 178–375 (HYIEMHIIVE…QVSQCLQNQP (198 aa)) enclose the Peptidase M12B domain. Intrachain disulfides connect Cys-287-Cys-370, Cys-329-Cys-354, Cys-331-Cys-336, and Cys-442-Cys-455. A glycan (N-linked (GlcNAc...) asparagine) is linked at Asn-353. Residues 384-470 (NPVCGNNRVE…ACQEDLYVIN (87 aa)) enclose the Disintegrin domain. 2 N-linked (GlcNAc...) asparagine glycosylation sites follow: Asn-456 and Asn-564. The EGF-like domain occupies 610–643 (LGYDCTPATCSDHGVCNNKRHCHCNPTYVPPNCE). Cystine bridges form between Cys-614-Cys-625, Cys-619-Cys-631, and Cys-633-Cys-642. Residues 681–701 (WPFFLIIPFFVIFSVLVATVV) form a helical membrane-spanning segment. The Cytoplasmic portion of the chain corresponds to 702–735 (KVYYQKKKWKTEDYANDENIESESEPKSSKVSSK). The segment at 716–735 (ANDENIESESEPKSSKVSSK) is disordered. Ser-723 bears the Phosphoserine mark.

In terms of assembly, heterodimer with ADAM1/fertilin subunit alpha. In terms of processing, the signal and the metalloprotease domain are cleaved during the epididymal maturation of the spermatozoa. Expressed specifically in testis.

The protein resides in the membrane. Sperm surface membrane protein that may be involved in sperm-egg plasma membrane adhesion and fusion during fertilization. Could have a direct role in sperm-zona binding or migration of sperm from the uterus into the oviduct. Interactions with egg membrane could be mediated via binding between its disintegrin-like domain to one or more integrins receptors on the egg. This is a non catalytic metalloprotease-like protein. The chain is Disintegrin and metalloproteinase domain-containing protein 2 (ADAM2) from Cavia porcellus (Guinea pig).